A 420-amino-acid chain; its full sequence is MLAASFKRQPSQLVRGLGAVLRTPTRIGHVRTMATLKTTDKKAPEDIEGSDTVQIELPESSFESYMLEPPDLSYETSKATLLQMYKDMVIIRRMEMACDALYKAKKIRGFCHLSVGQEAIAVGIENAITKLDSIITSYRCHGFTFMRGASVKAVLAELMGRRAGVSYGKGGSMHLYAPGFYGGNGIVGAQVPLGAGLAFAHQYKNEDACSFTLYGDGASNQGQVFESFNMAKLWNLPVVFCCENNKYGMGTAASRSSAMTEYFKRGQYIPGLKVNGMDILAVYQASKFAKDWCLSGKGPLVLEYETYRYGGHSMSDPGTTYRTRDEIQHMRSKNDPIAGLKMHLIDLGIATEAEVKAYDKSARKYVDEQVELADAAPPPEAKLSILFEDVYVKGTETPTLRGRIPEDTWDFKKQGFASRD.

A mitochondrion-targeting transit peptide spans M1–M33. The pyruvate site is built by H112, Y138, R139, A177, G185, V187, D216, G217, A218, N245, and Y247. Residues Y138 and R139 each contribute to the thiamine diphosphate site. 6 residues coordinate thiamine diphosphate: G185, V187, D216, G217, A218, and N245. Residue D216 participates in Mg(2+) binding. The Mg(2+) site is built by N245 and Y247. H312 is a binding site for thiamine diphosphate. S313 is subject to Phosphoserine; by PDK1 and PDK2.

Pyruvate dehydrogenase (E1) is a tetramer of 2 alpha and 2 beta subunits. Eukaryotic pyruvate dehydrogenase (PDH) complexes are organized as a core consisting of the oligomeric dihydrolipoamide acetyl-transferase (E2), around which are arranged multiple copies of pyruvate dehydrogenase (E1), dihydrolipoamide dehydrogenase (E3) and protein X (E3BP) bound by non-covalent bonds. Thiamine diphosphate is required as a cofactor. Mg(2+) serves as cofactor. In terms of processing, phosphorylated at Ser-313 by pyruvate dehydrogenase kinases PKP1 (PDK1) and PKP2 (PDK2), and dephosphorylated by pyruvate dehydrogenase phosphatases PTC5 and PTC6.

Its subcellular location is the mitochondrion matrix. The catalysed reaction is N(6)-[(R)-lipoyl]-L-lysyl-[protein] + pyruvate + H(+) = N(6)-[(R)-S(8)-acetyldihydrolipoyl]-L-lysyl-[protein] + CO2. E1 activity is regulated by phosphorylation (inactivation) and dephosphorylation (activation) of the alpha subunit. Its function is as follows. The pyruvate dehydrogenase complex catalyzes the overall conversion of pyruvate to acetyl-CoA and CO(2). The protein is Pyruvate dehydrogenase E1 component subunit alpha, mitochondrial (PDA1) of Saccharomyces cerevisiae (strain ATCC 204508 / S288c) (Baker's yeast).